Consider the following 126-residue polypeptide: MPDPAKSAPAPKKGSKKAVTKAQKKDGKKRKRSRKESYSIYVYKVLKQVHPDTGISSKAMGIMNSFVNDIFERIAGEASRLAHYNKRSTITSREIQTAVRLLLPGELAKHAVSEGTKAVTKYTSSK.

Residues 1–12 are compositionally biased toward low complexity; the sequence is MPDPAKSAPAPK. The tract at residues 1-35 is disordered; sequence MPDPAKSAPAPKKGSKKAVTKAQKKDGKKRKRSRK. Position 2 is an N-acetylproline; partial (P2). Position 6 is an N6-(2-hydroxyisobutyryl)lysine; alternate (K6). K6 bears the N6-(beta-hydroxybutyryl)lysine; alternate mark. An N6-acetyllysine; alternate modification is found at K6. At K6 the chain carries N6-butyryllysine; alternate. K6 is subject to N6-crotonyllysine; alternate. Residue K6 is modified to N6-lactoyllysine; alternate. K6 participates in a covalent cross-link: Glycyl lysine isopeptide (Lys-Gly) (interchain with G-Cter in SUMO2); alternate. Position 7 is an ADP-ribosylserine (S7). An N6-(beta-hydroxybutyryl)lysine; alternate modification is found at K12. Residues K12 and K13 each carry the N6-acetyllysine; alternate modification. 2 positions are modified to N6-crotonyllysine; alternate: K12 and K13. Position 12 is an N6-lactoyllysine; alternate (K12). Position 13 is an N6-(2-hydroxyisobutyryl)lysine; alternate (K13). S15 is modified (phosphoserine; by STK4/MST1). 4 positions are modified to N6-acetyllysine; alternate: K16, K17, K21, and K24. K16, K17, K21, and K24 each carry N6-crotonyllysine; alternate. N6-lactoyllysine; alternate occurs at positions 16, 17, 21, and 24. 2 positions are modified to N6-(beta-hydroxybutyryl)lysine; alternate: K17 and K21. K17 carries the post-translational modification N6-glutaryllysine; alternate. K21 and K24 each carry N6-(2-hydroxyisobutyryl)lysine; alternate. K21 carries the post-translational modification N6-butyryllysine; alternate. A Glycyl lysine isopeptide (Lys-Gly) (interchain with G-Cter in SUMO2); alternate cross-link involves residue K21. An N6-(2-hydroxyisobutyryl)lysine modification is found at K25. Position 35 is an N6-(2-hydroxyisobutyryl)lysine; alternate (K35). K35 is subject to N6-(beta-hydroxybutyryl)lysine; alternate. Position 35 is an N6-crotonyllysine; alternate (K35). K35 is modified (N6-glutaryllysine; alternate). N6-succinyllysine; alternate is present on K35. K35 participates in a covalent cross-link: Glycyl lysine isopeptide (Lys-Gly) (interchain with G-Cter in ubiquitin); alternate. E36 bears the PolyADP-ribosyl glutamic acid mark. Residue S37 is modified to Phosphoserine; by AMPK. N6-(2-hydroxyisobutyryl)lysine; alternate is present on residues K44, K47, and K58. K44 carries the post-translational modification N6-lactoyllysine; alternate. An N6-glutaryllysine; alternate mark is found at K44 and K47. K47 bears the N6-methyllysine; alternate mark. K58 carries the N6,N6-dimethyllysine; alternate modification. R80 is modified (dimethylated arginine). K86 bears the N6-(2-hydroxyisobutyryl)lysine; alternate mark. Position 86 is an N6-(beta-hydroxybutyryl)lysine; alternate (K86). Position 86 is an N6-acetyllysine; alternate (K86). K86 is subject to N6-lactoyllysine; alternate. Residue K86 is modified to N6,N6,N6-trimethyllysine; alternate. R87 and R93 each carry omega-N-methylarginine. An N6-(2-hydroxyisobutyryl)lysine; alternate modification is found at K109. K109 bears the N6-lactoyllysine; alternate mark. The residue at position 109 (K109) is an N6-glutaryllysine; alternate. K109 carries the post-translational modification N6-methyllysine; alternate. Residue S113 is glycosylated (O-linked (GlcNAc) serine). T116 bears the Phosphothreonine mark. N6-(2-hydroxyisobutyryl)lysine; alternate occurs at positions 117 and 121. 2 positions are modified to N6-(beta-hydroxybutyryl)lysine; alternate: K117 and K121. 2 positions are modified to N6-lactoyllysine; alternate: K117 and K121. An N6-glutaryllysine; alternate mark is found at K117 and K121. N6-succinyllysine; alternate occurs at positions 117 and 121. K117 is subject to N6-malonyllysine; alternate. K117 bears the N6-methylated lysine; alternate mark. K121 is covalently cross-linked (Glycyl lysine isopeptide (Lys-Gly) (interchain with G-Cter in ubiquitin); alternate).

The protein belongs to the histone H2B family. As to quaternary structure, the nucleosome is a histone octamer containing two molecules each of H2A, H2B, H3 and H4 assembled in one H3-H4 heterotetramer and two H2A-H2B heterodimers. The octamer wraps approximately 147 bp of DNA. Monoubiquitination at Lys-35 (H2BK34Ub) by the MSL1/MSL2 dimer is required for histone H3 'Lys-4' (H3K4me) and 'Lys-79' (H3K79me) methylation and transcription activation at specific gene loci, such as HOXA9 and MEIS1 loci. Similarly, monoubiquitination at Lys-121 (H2BK120Ub) by the RNF20/40 complex gives a specific tag for epigenetic transcriptional activation and is also prerequisite for histone H3 'Lys-4' and 'Lys-79' methylation. It also functions cooperatively with the FACT dimer to stimulate elongation by RNA polymerase II. H2BK120Ub also acts as a regulator of mRNA splicing: deubiquitination by USP49 is required for efficient cotranscriptional splicing of a large set of exons. Post-translationally, phosphorylation at Ser-37 (H2BS36ph) by AMPK in response to stress promotes transcription. Phosphorylated on Ser-15 (H2BS14ph) by STK4/MST1 during apoptosis; which facilitates apoptotic chromatin condensation. Also phosphorylated on Ser-15 in response to DNA double strand breaks (DSBs), and in correlation with somatic hypermutation and immunoglobulin class-switch recombination. In terms of processing, glcNAcylation at Ser-113 promotes monoubiquitination of Lys-121. It fluctuates in response to extracellular glucose, and associates with transcribed genes. ADP-ribosylated by PARP1 or PARP2 on Ser-7 (H2BS6ADPr) in response to DNA damage. H2BS6ADPr promotes recruitment of CHD1L. Poly ADP-ribosylation on Glu-36 (H2BE35ADPr) by PARP1 regulates adipogenesis: it inhibits phosphorylation at Ser-37 (H2BS36ph), thereby blocking expression of pro-adipogenetic genes. Post-translationally, crotonylation (Kcr) is specifically present in male germ cells and marks testis-specific genes in post-meiotic cells, including X-linked genes that escape sex chromosome inactivation in haploid cells. Crotonylation marks active promoters and enhancers and confers resistance to transcriptional repressors. It is also associated with post-meiotically activated genes on autosomes. In terms of processing, lactylated in macrophages by EP300/P300 by using lactoyl-CoA directly derived from endogenous or exogenous lactate, leading to stimulates gene transcription.

The protein localises to the nucleus. Its subcellular location is the chromosome. Functionally, core component of nucleosome. Nucleosomes wrap and compact DNA into chromatin, limiting DNA accessibility to the cellular machineries which require DNA as a template. Histones thereby play a central role in transcription regulation, DNA repair, DNA replication and chromosomal stability. DNA accessibility is regulated via a complex set of post-translational modifications of histones, also called histone code, and nucleosome remodeling. This chain is Histone H2B type 1-O, found in Homo sapiens (Human).